The primary structure comprises 992 residues: Sorting nexin-19 (992 aa).

A PXA domain is found at 95 to 272 (ERQLEREINR…VLVGIFSKAR (178 aa)). Residues 410-442 (ALEPKDGEASEGAEAEEGPGTETETGLPVSTLN) form a disordered region. The span at 418 to 428 (ASEGAEAEEGP) shows a compositional bias: acidic residues. The region spanning 533–663 (LRITGTITAR…EFLALNTDAR (131 aa)) is the PX domain. A 1,2-diacyl-sn-glycero-3-phospho-(1D-myo-inositol-3-phosphate) contacts are provided by R582 and R629. Disordered stretches follow at residues 692–726 (FPRS…SRLR), 778–797 (QPTK…RVDS), and 973–992 (AATT…GVSS). Basic and acidic residues-rich tracts occupy residues 709–719 (TESKPQTEGKK) and 782–795 (APEK…KGRV). Polar residues predominate over residues 980–992 (DTPGNSKRMGVSS).

Belongs to the sorting nexin family. Interacts with PTPRN.

The protein localises to the early endosome membrane. It localises to the cytoplasmic vesicle membrane. Functionally, plays a role in intracellular vesicle trafficking and exocytosis. May play a role in maintaining insulin-containing dense core vesicles in pancreatic beta-cells and in preventing their degradation. May play a role in insulin secretion. Interacts with membranes containing phosphatidylinositol 3-phosphate (PtdIns(3P)). This is Sorting nexin-19 (SNX19) from Homo sapiens (Human).